The following is a 378-amino-acid chain: Apoptosis-inducing factor 1 (378 aa).

Residues 7 to 25 (NIVVVGAGVFGVSVANHLY) traverse the membrane as a helical segment. Residues 12–16 (GAGVF), arginine 51, lysine 56, and aspartate 283 each bind FAD.

This sequence belongs to the FAD-dependent oxidoreductase family. Requires FAD as cofactor.

The protein localises to the mitochondrion outer membrane. The protein resides in the nucleus. Its function is as follows. Putative FAD-dependent oxidoreductase involved in the resistance to cercosporin and other singlet oxygen-generating photosensitizers. Translocates from mitochondria to the nucleus under apoptotic conditions, where it degrades DNA and induces apoptosis. The protein is Apoptosis-inducing factor 1 (AIF1) of Saccharomyces cerevisiae (strain ATCC 204508 / S288c) (Baker's yeast).